A 386-amino-acid chain; its full sequence is 2-deoxy-scyllo-inosose synthase (386 aa).

NAD(+) is bound by residues aspartate 42, glutamate 73–lysine 76, glycine 105–asparagine 109, threonine 129–threonine 130, serine 140–lysine 142, and lysine 151–asparagine 152. Lysine 142 is an active-site residue. Co(2+) is bound at residue glutamate 184. The active site involves glutamate 244. Co(2+) is bound by residues histidine 247 and histidine 263.

This sequence belongs to the sugar phosphate cyclases superfamily. DOI synthase family. Requires NAD(+) as cofactor. The cofactor is Co(2+).

It catalyses the reaction D-glucose 6-phosphate = 2-deoxy-L-scyllo-inosose + phosphate. It participates in metabolic intermediate biosynthesis; 2-deoxystreptamine biosynthesis; 2-deoxystreptamine from D-glucose 6-phosphate: step 1/4. The protein operates within antibiotic biosynthesis; tobramycin biosynthesis. Functionally, catalyzes the intramolecular carbocycle formation from D-glucose-6-phosphate to 2-deoxy-scyllo-inosose (DOI). The polypeptide is 2-deoxy-scyllo-inosose synthase (tbmA) (Streptoalloteichus tenebrarius (strain ATCC 17920 / DSM 40477 / JCM 4838 / CBS 697.72 / NBRC 16177 / NCIMB 11028 / NRRL B-12390 / A12253. 1 / ISP 5477) (Streptomyces tenebrarius)).